Consider the following 337-residue polypeptide: Fructose-1,6-bisphosphatase class 1 (337 aa).

Mg(2+)-binding residues include Glu91, Asp113, Leu115, and Asp116. Substrate is bound by residues 116–119 (DGSS), Asn209, Tyr242, and Lys275. Glu281 contacts Mg(2+).

Belongs to the FBPase class 1 family. Homotetramer. Mg(2+) is required as a cofactor.

The protein resides in the cytoplasm. It carries out the reaction beta-D-fructose 1,6-bisphosphate + H2O = beta-D-fructose 6-phosphate + phosphate. It functions in the pathway carbohydrate biosynthesis; gluconeogenesis. The sequence is that of Fructose-1,6-bisphosphatase class 1 from Nitratidesulfovibrio vulgaris (strain DP4) (Desulfovibrio vulgaris).